We begin with the raw amino-acid sequence, 268 residues long: Homeobox protein CDX-1 (268 aa).

The interval 1–152 (MYVGYVLDKD…AGGGGSGKTR (152 aa)) is disordered. Pro residues-rich tracts occupy residues 29-42 (TYAP…PPQY) and 54-67 (APAP…PFPA). A compositionally biased stretch (low complexity) spans 73–91 (AAAYGPGPTASAASPAPLA). The span at 92–108 (FGPPPDFSPVPAPPGPG) shows a compositional bias: pro residues. Low complexity predominate over residues 115 to 128 (SLGAPGAPSSPGAP). The homeobox DNA-binding region spans 154 to 213 (KDKYRVVYTDHQRLELEKEFHYSRYITIRRKSELAANLGLTERQVKIWFQNRRAKERKVN). The segment at 157-178 (YRVVYTDHQRLELEKEFHYSRY) is interaction with DNA. The segment at 196–207 (RQVKIWFQNRRA) is interaction with 5-mCpG DNA. Residues 209 to 268 (ERKVNKKKQQQQQPLPPTQLPLPLDGTPTPSGPPLGSLCPTNAGLLGTPSPVPVKEEFLP) form a disordered region. Residues 229-246 (PLPLDGTPTPSGPPLGSL) are compositionally biased toward low complexity.

The protein belongs to the Caudal homeobox family. In terms of tissue distribution, intestinal epithelium.

Its subcellular location is the nucleus. Plays a role in transcriptional regulation. Involved in activated KRAS-mediated transcriptional activation of PRKD1 in colorectal cancer (CRC) cells. Binds to the PRKD1 promoter in colorectal cancer (CRC) cells. Could play a role in the terminal differentiation of the intestine. Binds preferentially to methylated DNA. This Mus musculus (Mouse) protein is Homeobox protein CDX-1 (Cdx1).